A 260-amino-acid chain; its full sequence is Phosphate import ATP-binding protein PstB 2 (260 aa).

One can recognise an ABC transporter domain in the interval 9–255; that stretch reads IKVKDLSFYY…PLDSRTRDYV (247 aa). Position 41 to 48 (41 to 48) interacts with ATP; it reads GPSGCGKS.

It belongs to the ABC transporter superfamily. Phosphate importer (TC 3.A.1.7) family. The complex is composed of two ATP-binding proteins (PstB), two transmembrane proteins (PstC and PstA) and a solute-binding protein (PstS).

It localises to the cell inner membrane. The catalysed reaction is phosphate(out) + ATP + H2O = ADP + 2 phosphate(in) + H(+). Its function is as follows. Part of the ABC transporter complex PstSACB involved in phosphate import. Responsible for energy coupling to the transport system. The sequence is that of Phosphate import ATP-binding protein PstB 2 from Nostoc sp. (strain PCC 7120 / SAG 25.82 / UTEX 2576).